A 131-amino-acid polypeptide reads, in one-letter code: Profilin (131 aa).

It belongs to the profilin family. Occurs in many kinds of cells as a complex with monomeric actin in a 1:1 ratio.

It localises to the cytoplasm. Its subcellular location is the cytoskeleton. Functionally, binds to actin and affects the structure of the cytoskeleton. At high concentrations, profilin prevents the polymerization of actin, whereas it enhances it at low concentrations. By binding to PIP2, it inhibits the formation of IP3 and DG. The polypeptide is Profilin (Chenopodium album (Fat hen)).